We begin with the raw amino-acid sequence, 190 residues long: Adenylate kinase (190 aa).

Residue 12–17 (GSGKTT) participates in ATP binding. The NMP stretch occupies residues 33–62 (STGDLLRAEVASGSELGKTIDSFISKGNLV). AMP contacts are provided by residues T34, R39, 60–62 (NLV), 87–90 (GYPR), and Q94. An LID region spans residues 129–135 (GRARGAD). Position 130 (R130) interacts with ATP. Residues R132 and R144 each coordinate AMP. ATP is bound at residue R172.

The protein belongs to the adenylate kinase family. As to quaternary structure, monomer.

It is found in the cytoplasm. The catalysed reaction is AMP + ATP = 2 ADP. Its pathway is purine metabolism; AMP biosynthesis via salvage pathway; AMP from ADP: step 1/1. Its function is as follows. Catalyzes the reversible transfer of the terminal phosphate group between ATP and AMP. Plays an important role in cellular energy homeostasis and in adenine nucleotide metabolism. This is Adenylate kinase from Campylobacter lari (strain RM2100 / D67 / ATCC BAA-1060).